The sequence spans 230 residues: Probable dual specificity protein phosphatase DDB_G0283417 (230 aa).

The region spanning 78 to 230 is the Tyrosine-protein phosphatase domain; that stretch reads NNNYESINLY…LEIFEKELLF (153 aa). Cysteine 174 (phosphocysteine intermediate) is an active-site residue.

Belongs to the protein-tyrosine phosphatase family. Non-receptor class dual specificity subfamily.

It catalyses the reaction O-phospho-L-tyrosyl-[protein] + H2O = L-tyrosyl-[protein] + phosphate. The catalysed reaction is O-phospho-L-seryl-[protein] + H2O = L-seryl-[protein] + phosphate. It carries out the reaction O-phospho-L-threonyl-[protein] + H2O = L-threonyl-[protein] + phosphate. Functionally, has a dual specificity toward Ser/Thr and Tyr-containing proteins. In Dictyostelium discoideum (Social amoeba), this protein is Probable dual specificity protein phosphatase DDB_G0283417.